The primary structure comprises 472 residues: 3-isopropylmalate dehydratase large subunit (472 aa).

[4Fe-4S] cluster contacts are provided by Cys347, Cys407, and Cys410.

It belongs to the aconitase/IPM isomerase family. LeuC type 1 subfamily. As to quaternary structure, heterodimer of LeuC and LeuD. [4Fe-4S] cluster serves as cofactor.

The catalysed reaction is (2R,3S)-3-isopropylmalate = (2S)-2-isopropylmalate. Its pathway is amino-acid biosynthesis; L-leucine biosynthesis; L-leucine from 3-methyl-2-oxobutanoate: step 2/4. Catalyzes the isomerization between 2-isopropylmalate and 3-isopropylmalate, via the formation of 2-isopropylmaleate. The polypeptide is 3-isopropylmalate dehydratase large subunit (Parasynechococcus marenigrum (strain WH8102)).